A 766-amino-acid polypeptide reads, in one-letter code: UPF0313 protein PP_4872 (766 aa).

The region spanning 371–649 is the Radical SAM core domain; the sequence is AYEMIRFSVN…KAFLRYHDPK (279 aa). The [4Fe-4S] cluster site is built by C385, C389, and C392. The tract at residues 670 to 766 is disordered; that stretch reads GKHQLIPLHQ…KKPRQPVIPR (97 aa). The span at 723 to 735 shows a compositional bias: basic and acidic residues; that stretch reads KPWDKREKAKAEA.

Belongs to the UPF0313 family. [4Fe-4S] cluster serves as cofactor.

The chain is UPF0313 protein PP_4872 from Pseudomonas putida (strain ATCC 47054 / DSM 6125 / CFBP 8728 / NCIMB 11950 / KT2440).